The primary structure comprises 412 residues: BSD domain-containing protein 1 (412 aa).

The BSD domain maps to 145-197; it reads WLSTFSLEERKAEISELLVSSPAIRALYTKMVPAAVAHAEFWQRYFYKVFQLE. A compositionally biased stretch (basic and acidic residues) spans 208–217; sequence QRAEQTDHSE. Disordered stretches follow at residues 208 to 227, 253 to 272, and 298 to 412; these read QRAE…EDEE, VTVA…ASLS, and ESVT…ENWE. Composition is skewed to polar residues over residues 259–272 and 298–308; these read PESS…ASLS and ESVTIRVTQPS. Serine 308 bears the Phosphoserine mark. Positions 328-349 are enriched in basic and acidic residues; it reads PEERPAPREETAREDMAQDLRV. Over residues 353-372 the composition is skewed to polar residues; sequence NSDSGKSTPSNNGKKGSSTD. 2 stretches are compositionally biased toward acidic residues: residues 373 to 390 and 400 to 412; these read VSED…EEEV and TEEL…ENWE.

The chain is BSD domain-containing protein 1 (bsdc1) from Danio rerio (Zebrafish).